The chain runs to 189 residues: GMP synthase [glutamine-hydrolyzing] subunit A (189 aa).

The region spanning 5–189 is the Glutamine amidotransferase type-1 domain; that stretch reads KILVVNNYGQ…MNFFEVCDLY (185 aa). Cysteine 79 serves as the catalytic Nucleophile. Residues histidine 166 and glutamate 168 contribute to the active site.

As to quaternary structure, heterodimer composed of a glutamine amidotransferase subunit (A) and a GMP-binding subunit (B).

The enzyme catalyses XMP + L-glutamine + ATP + H2O = GMP + L-glutamate + AMP + diphosphate + 2 H(+). Its pathway is purine metabolism; GMP biosynthesis; GMP from XMP (L-Gln route): step 1/1. Its function is as follows. Catalyzes the synthesis of GMP from XMP. The sequence is that of GMP synthase [glutamine-hydrolyzing] subunit A from Methanosarcina mazei (strain ATCC BAA-159 / DSM 3647 / Goe1 / Go1 / JCM 11833 / OCM 88) (Methanosarcina frisia).